The following is a 93-amino-acid chain: Cell division topological specificity factor (93 aa).

The protein belongs to the MinE family.

In terms of biological role, prevents the cell division inhibition by proteins MinC and MinD at internal division sites while permitting inhibition at polar sites. This ensures cell division at the proper site by restricting the formation of a division septum at the midpoint of the long axis of the cell. The protein is Cell division topological specificity factor of Alkaliphilus oremlandii (strain OhILAs) (Clostridium oremlandii (strain OhILAs)).